Reading from the N-terminus, the 373-residue chain is mRNA export factor rae-1 (373 aa).

At Met1 the chain carries N-acetylmethionine. WD repeat units lie at residues Ala40–Gly82, Asn87–Val126, Thr128–Gln169, and Gln276–Thr315.

It belongs to the WD repeat rae1 family. In terms of assembly, the nuclear pore complex (NPC) constitutes the exclusive means of nucleocytoplasmic transport. NPCs allow the passive diffusion of ions and small molecules and the active, nuclear transport receptor-mediated bidirectional transport of macromolecules such as proteins, RNAs, ribonucleoparticles (RNPs), and ribosomal subunits across the nuclear envelope. Interacts with rpm-1. Expressed along the ventral and dorsal nerve cords.

It is found in the nucleus. Its subcellular location is the nuclear pore complex. The protein resides in the cell projection. The protein localises to the axon. It localises to the synapse. In terms of biological role, functions as a component of the nuclear pore complex (NPC). NPC components, collectively referred to as nucleoporins (NUPs), can play the role of both NPC structural components and of docking or interaction partners for transiently associated nuclear transport factors. It is specifically important for nuclear mRNA export. Has a role in neuronal development, where it acts downstream of rpm-1 to control axon termination and synapse formation in anterior lateral microtubule (ALM) and posterior lateral microtubule (PLM) mechanosensory neurons. This chain is mRNA export factor rae-1, found in Caenorhabditis elegans.